We begin with the raw amino-acid sequence, 162 residues long: NADH-quinone oxidoreductase subunit I (162 aa).

2 4Fe-4S ferredoxin-type domains span residues 54–83 (RRYE…IESE) and 93–122 (TRYD…ETQI). Residues cysteine 63, cysteine 66, cysteine 69, cysteine 73, cysteine 102, cysteine 105, cysteine 108, and cysteine 112 each coordinate [4Fe-4S] cluster.

This sequence belongs to the complex I 23 kDa subunit family. In terms of assembly, NDH-1 is composed of 14 different subunits. Subunits NuoA, H, J, K, L, M, N constitute the membrane sector of the complex. [4Fe-4S] cluster serves as cofactor.

The protein localises to the cell inner membrane. The enzyme catalyses a quinone + NADH + 5 H(+)(in) = a quinol + NAD(+) + 4 H(+)(out). Its function is as follows. NDH-1 shuttles electrons from NADH, via FMN and iron-sulfur (Fe-S) centers, to quinones in the respiratory chain. The immediate electron acceptor for the enzyme in this species is believed to be ubiquinone. Couples the redox reaction to proton translocation (for every two electrons transferred, four hydrogen ions are translocated across the cytoplasmic membrane), and thus conserves the redox energy in a proton gradient. In Burkholderia cenocepacia (strain HI2424), this protein is NADH-quinone oxidoreductase subunit I.